Consider the following 574-residue polypeptide: Putative DNA-directed RNA polymerase subunit alpha-like 1 (574 aa).

Residues 1–352 are alpha N-terminal domain (alpha-NTD); it reads MTNNKNFADW…ELFSLFLQTS (352 aa). Residues 419–574 form an alpha C-terminal domain (alpha-CTD) region; that stretch reads PDYDRYNSIT…RERKRGNREF (156 aa). A disordered region spans residues 534–574; it reads QETLRKEQDEQSSQQQKDQMEKRRWERQNRERERKRGNREF. The segment covering 551-574 has biased composition (basic and acidic residues); sequence DQMEKRRWERQNRERERKRGNREF.

Belongs to the RNA polymerase alpha chain family. As to quaternary structure, in plastids the minimal PEP RNA polymerase catalytic core is composed of four subunits: alpha, beta, beta', and beta''. When a (nuclear-encoded) sigma factor is associated with the core the holoenzyme is formed, which can initiate transcription.

It is found in the plastid. The protein resides in the chloroplast. The enzyme catalyses RNA(n) + a ribonucleoside 5'-triphosphate = RNA(n+1) + diphosphate. DNA-dependent RNA polymerase catalyzes the transcription of DNA into RNA using the four ribonucleoside triphosphates as substrates. This chain is Putative DNA-directed RNA polymerase subunit alpha-like 1 (rpoAL1-A), found in Pelargonium hortorum (Common geranium).